We begin with the raw amino-acid sequence, 862 residues long: Protein JOKA2 (862 aa).

The PB1 domain maps to 6-90; sequence SIVIKVKYEE…NPLRISARLN (85 aa). Residues 92 to 106 are compositionally biased toward low complexity; the sequence is GERSGRASARSSGNS. Disordered stretches follow at residues 92-117, 194-234, and 295-345; these read GERSGRASARSSGNSTPLRSPRVQPP, KGNT…ASNE, and VRNS…DSSG. The segment covering 325-345 has biased composition (polar residues); it reads SASSSKVKQCNWDSPNADSSG. A ZZ-type; degenerate zinc finger spans residues 442 to 492; it reads HKGVRCDGCGVHPITGPRFISKVKENYDLCSICFAEMGNDADYIRMDRPLT. Zn(2+)-binding residues include cysteine 447, cysteine 450, cysteine 471, and cysteine 474. The region spanning 811–860 is the UBA domain; it reads SVDDLCGVAEWDPILEELKEMGFCDKEMNKKLLKKNNGSIKRVVMDLIAG. An ATG8 interacting motif (AIM) motif is present at residues 817–824; it reads GVAEWDPI.

Interacts (via C-terminal AIM motif) with ATG8CL.

It localises to the vacuole. Its subcellular location is the cytoplasmic vesicle. The protein resides in the autophagosome. Functionally, autophagic substrate that functions as a host autophagy cargo receptor. Requires ATG8 protein expression to be recognized as an autophagic substrate. Activates ATG8CL-mediated selective autophagy, and contributes to defense against the fungal pathogen Phytophtora infestans. This chain is Protein JOKA2, found in Solanum tuberosum (Potato).